We begin with the raw amino-acid sequence, 802 residues long: Leucine--tRNA ligase (802 aa).

The short motif at 40 to 51 is the 'HIGH' region element; that stretch reads PYPSGAGLHVGH. The short motif at 576–580 is the 'KMSKS' region element; the sequence is KMSKS. Lys-579 provides a ligand contact to ATP.

Belongs to the class-I aminoacyl-tRNA synthetase family.

It localises to the cytoplasm. It carries out the reaction tRNA(Leu) + L-leucine + ATP = L-leucyl-tRNA(Leu) + AMP + diphosphate. This Bacillus thuringiensis subsp. konkukian (strain 97-27) protein is Leucine--tRNA ligase.